Reading from the N-terminus, the 575-residue chain is Proline--tRNA ligase 1 (575 aa).

This sequence belongs to the class-II aminoacyl-tRNA synthetase family. ProS type 1 subfamily. As to quaternary structure, homodimer.

The protein resides in the cytoplasm. The enzyme catalyses tRNA(Pro) + L-proline + ATP = L-prolyl-tRNA(Pro) + AMP + diphosphate. Its function is as follows. Catalyzes the attachment of proline to tRNA(Pro) in a two-step reaction: proline is first activated by ATP to form Pro-AMP and then transferred to the acceptor end of tRNA(Pro). As ProRS can inadvertently accommodate and process non-cognate amino acids such as alanine and cysteine, to avoid such errors it has two additional distinct editing activities against alanine. One activity is designated as 'pretransfer' editing and involves the tRNA(Pro)-independent hydrolysis of activated Ala-AMP. The other activity is designated 'posttransfer' editing and involves deacylation of mischarged Ala-tRNA(Pro). The misacylated Cys-tRNA(Pro) is not edited by ProRS. This chain is Proline--tRNA ligase 1, found in Anaeromyxobacter dehalogenans (strain 2CP-C).